The chain runs to 465 residues: Pancreatic triacylglycerol lipase (465 aa).

Positions 1-16 (MLLVWSLALLLGAVAG) are cleaved as a signal peptide. Cystine bridges form between C20–C26 and C107–C118. The Nucleophile role is filled by S169. Residue D193 is the Charge relay system of the active site. 4 residues coordinate Ca(2+): E204, R207, D209, and D212. The cysteines at positions 254 and 278 are disulfide-linked. The active-site Charge relay system is H280. 3 disulfide bridges follow: C302–C313, C316–C321, and C449–C465. One can recognise a PLAT domain in the interval 355 to 465 (WRYKVSVTLS…EDVLLTLNAC (111 aa)).

It belongs to the AB hydrolase superfamily. Lipase family. As to quaternary structure, forms a 1:1 stoichiometric complex with (pro)colipase/CLPS. As to expression, expressed in many tissues with highest expression in liver. During hibernation there is a significant increases in expression in heart, white adipose tissue (WAT), and testis; but not in pancreas.

It is found in the secreted. It catalyses the reaction a triacylglycerol + H2O = a diacylglycerol + a fatty acid + H(+). The enzyme catalyses 1,2,3-tributanoylglycerol + H2O = dibutanoylglycerol + butanoate + H(+). The catalysed reaction is 1,2,3-tri-(9Z-octadecenoyl)-glycerol + H2O = di-(9Z)-octadecenoylglycerol + (9Z)-octadecenoate + H(+). It carries out the reaction all-trans-retinyl hexadecanoate + H2O = all-trans-retinol + hexadecanoate + H(+). It catalyses the reaction 1,2-di-(9Z-octadecenoyl)-glycerol + H2O = (9Z-octadecenoyl)-glycerol + (9Z)-octadecenoate + H(+). Inhibited by bile salts, is reactivated by (pro)colipase/CLPS. Functionally, plays an important role in fat metabolism. It preferentially splits the esters of long-chain fatty acids at positions 1 and 3, producing mainly 2-monoacylglycerol and free fatty acids, and shows considerably higher activity against insoluble emulsified substrates than against soluble ones. Plays a role in hibernation as a key enzyme that shows high activity at low temperatures. When expressed in the hibernating heart it liberates fatty acids from triglycerides at temperatures as low as 0 degrees Celsius. This Ictidomys tridecemlineatus (Thirteen-lined ground squirrel) protein is Pancreatic triacylglycerol lipase (PNLIP).